A 527-amino-acid chain; its full sequence is 2-isopropylmalate synthase (527 aa).

Residues 18 to 280 (IRIFDTTLRD…QTNINSKRLV (263 aa)) form the Pyruvate carboxyltransferase domain. Residues Asp-27, His-215, His-217, and Asn-251 each coordinate Mn(2+). The interval 405 to 527 (TLVDYEVTSG…ASDPGELPQP (123 aa)) is regulatory domain.

Belongs to the alpha-IPM synthase/homocitrate synthase family. LeuA type 1 subfamily. In terms of assembly, homodimer. Requires Mn(2+) as cofactor.

Its subcellular location is the cytoplasm. The enzyme catalyses 3-methyl-2-oxobutanoate + acetyl-CoA + H2O = (2S)-2-isopropylmalate + CoA + H(+). The protein operates within amino-acid biosynthesis; L-leucine biosynthesis; L-leucine from 3-methyl-2-oxobutanoate: step 1/4. In terms of biological role, catalyzes the condensation of the acetyl group of acetyl-CoA with 3-methyl-2-oxobutanoate (2-ketoisovalerate) to form 3-carboxy-3-hydroxy-4-methylpentanoate (2-isopropylmalate). In Rhodopirellula baltica (strain DSM 10527 / NCIMB 13988 / SH1), this protein is 2-isopropylmalate synthase.